We begin with the raw amino-acid sequence, 395 residues long: MSLAVNPADNLAALIRCASVTPAEGGALTALEAMLKPMGFSVERPVFHDEDTPDIENLYARKSGNGPHLMFAGHTDVVPPGNEGDWKHPPFSAAIEDGVMYGRGAVDMKGGVACFVAAVARHIEKHGSIKGSVSFLITGDEEGPAINGTVKLLDWAKQRGESWDASIVGEPSNPNALGDAIKIGRRGSLSGTITVHGVQGHAAYPHLAENPVRGITTLVDSLLYPAFDQGTANFQASNLEVTSIDVGNKATNVIANKATASFNIRFNDTWTAETLQAEIIARLEKAARDNRLRPGRETPIKYELTWREHPSHVFLTRDEKLIGTLTDSVEAVTGKRPELSTSGGTSDARFIKDYCPVVEFGLVGQTMHMVDERVALADLEGLTQIYERFIADFFG.

His-74 serves as a coordination point for Zn(2+). Asp-76 is an active-site residue. Residue Asp-107 coordinates Zn(2+). Glu-141 (proton acceptor) is an active-site residue. Residues Glu-142, Glu-170, and His-368 each coordinate Zn(2+).

It belongs to the peptidase M20A family. DapE subfamily. As to quaternary structure, homodimer. Zn(2+) serves as cofactor. The cofactor is Co(2+).

The enzyme catalyses N-succinyl-(2S,6S)-2,6-diaminopimelate + H2O = (2S,6S)-2,6-diaminopimelate + succinate. The protein operates within amino-acid biosynthesis; L-lysine biosynthesis via DAP pathway; LL-2,6-diaminopimelate from (S)-tetrahydrodipicolinate (succinylase route): step 3/3. Its function is as follows. Catalyzes the hydrolysis of N-succinyl-L,L-diaminopimelic acid (SDAP), forming succinate and LL-2,6-diaminopimelate (DAP), an intermediate involved in the bacterial biosynthesis of lysine and meso-diaminopimelic acid, an essential component of bacterial cell walls. The protein is Succinyl-diaminopimelate desuccinylase of Brucella anthropi (strain ATCC 49188 / DSM 6882 / CCUG 24695 / JCM 21032 / LMG 3331 / NBRC 15819 / NCTC 12168 / Alc 37) (Ochrobactrum anthropi).